The following is a 271-amino-acid chain: 2-aminophenol 1,6-dioxygenase subunit alpha (271 aa).

This sequence belongs to the LigB/MhpB extradiol dioxygenase family. As to quaternary structure, the APD complex is a heterotetramer of 2 alpha (CnbCa) and 2 beta (CnbCb) subunits.

Its pathway is xenobiotic degradation; nitrobenzene degradation. It participates in xenobiotic degradation; 4-chloronitrobenzene degradation. Its function is as follows. Component of the 2-aminophenol 1,6-dioxygenase (APD) complex that catalyzes the ring fission of 2-aminophenol to produce 2-aminomuconic semialdehyde. CnbCa may have a role in the stability of the complex. The complex is also active on other substrates such as 2-amino-5-chlorophenol (68% activity), protocatechuate (33% activity) and catechol (5% activity). Both 2-aminophenol and 2-amino-5-cholorophenol are likely native substrates for this dioxygenase which is involved in the reductive degradation pathway of both nitrobenzene (NB) and 4-chloronitrobenzene (4-CNB), allowing C.testosteroni strain CNB-1 to grow on these compounds as sole source of carbon, nitrogen, and energy. The chain is 2-aminophenol 1,6-dioxygenase subunit alpha from Comamonas testosteroni (Pseudomonas testosteroni).